The following is a 90-amino-acid chain: Conotoxin TxMMSK-06 (90 aa).

The first 22 residues, 1-22 (MMSKLGVLLTICLLLFPHTAVP), serve as a signal peptide directing secretion. Residues 23–74 (LDGDQHADQPAERLQDDISSEHHPMLNSIRRREQNQFMSFTSVKLRDSRGER) constitute a propeptide that is removed on maturation. Positions 24–43 (DGDQHADQPAERLQDDISSE) are disordered. A compositionally biased stretch (basic and acidic residues) spans 25 to 43 (GDQHADQPAERLQDDISSE). Disulfide bonds link Cys75/Cys89, Cys76/Cys85, and Cys81/Cys88. Pro87 carries the post-translational modification 4-hydroxyproline. Cys89 is subject to Cysteine amide.

Belongs to the conotoxin M superfamily. Expressed by the venom duct.

It is found in the secreted. The polypeptide is Conotoxin TxMMSK-06 (Conus textile (Cloth-of-gold cone)).